Here is a 265-residue protein sequence, read N- to C-terminus: DNA repair protein RecO (265 aa).

The protein belongs to the RecO family.

Involved in DNA repair and RecF pathway recombination. The protein is DNA repair protein RecO of Mycobacterium ulcerans (strain Agy99).